We begin with the raw amino-acid sequence, 195 residues long: PAP fimbrial minor pilin protein (195 aa).

An N-terminal signal peptide occupies residues 1–22; it reads MRLRFSVPLFFFGCVFVHGVFA. C58 and C97 are oxidised to a cystine.

This sequence belongs to the fimbrial protein family.

Its subcellular location is the secreted. It localises to the fimbrium. Its function is as follows. Fimbriae (also called pili), polar filaments radiating from the surface of the bacterium to a length of 0.5-1.5 micrometers and numbering 100-300 per cell, enable bacteria to colonize the epithelium of specific host organs. PapH seems to anchor the pilus to the bacterial cell. In addition the stoichiometric relationship between PapH and PapA determines the pilus length. The chain is PAP fimbrial minor pilin protein (papH) from Escherichia coli.